A 506-amino-acid chain; its full sequence is Proline--tRNA ligase (506 aa).

This sequence belongs to the class-II aminoacyl-tRNA synthetase family. ProS type 3 subfamily. Homodimer.

It is found in the cytoplasm. The enzyme catalyses tRNA(Pro) + L-proline + ATP = L-prolyl-tRNA(Pro) + AMP + diphosphate. Catalyzes the attachment of proline to tRNA(Pro) in a two-step reaction: proline is first activated by ATP to form Pro-AMP and then transferred to the acceptor end of tRNA(Pro). In Akkermansia muciniphila (strain ATCC BAA-835 / DSM 22959 / JCM 33894 / BCRC 81048 / CCUG 64013 / CIP 107961 / Muc), this protein is Proline--tRNA ligase.